Reading from the N-terminus, the 533-residue chain is Acid-sensing ion channel 3 (533 aa).

At 1 to 19 the chain is on the cytoplasmic side; sequence MKPRSGLEEAQRRQASDIR. The chain crosses the membrane as a helical span at residues 20-40; the sequence is VFASSCTMHGLGHIFGPGGLT. The residue at position 40 (T40) is a Phosphothreonine; by PKC. Topologically, residues 41-435 are extracellular; that stretch reads LRRGLWATAV…EQKAAYEVSE (395 aa). 7 cysteine pairs are disulfide-bonded: C93/C187, C165/C172, C283/C372, C317/C368, C321/C366, C330/C352, and C332/C344. Residue N176 is glycosylated (N-linked (GlcNAc...) asparagine). The interval 286-310 is disordered; it reads ASLDPDDFDPEPSDPLGSPRPRPSP. An N-linked (GlcNAc...) asparagine glycan is attached at N400. The chain crosses the membrane as a helical span at residues 436–456; sequence LLGDIGGQMGLFIGASLLTIL. The short motif at 449–451 is the GAS motif; ion selectivity filter element; that stretch reads GAS. Residues 457–533 lie on the Cytoplasmic side of the membrane; it reads EILDYLCEVF…HRTCYLVTRL (77 aa). Position 523 is a phosphoserine; by PKC (S523). The PDZ-binding signature appears at 530 to 533; that stretch reads VTRL.

Belongs to the amiloride-sensitive sodium channel (TC 1.A.6) family. ASIC3 subfamily. As to quaternary structure, can form homotrimeric channels. Heterotrimer; forms functional heterotrimers producing channel with different properties. Forms heterotrimers with ASIC2; gives rise to a biphasic current with a sustained current which discriminates poorly between Na(+) and K(+). Interacts with STOM; inhibits ASIC3 acid-evoked current. Interacts with LIN7B (via PDZ domain); increases ASIC3 expression at the plasma membrane. Interacts with MAGI1 (via PDZ domain); probably regulates ASIC3. Interacts with GOPC (via PDZ domain); probably regulates ASIC3. Interacts with DLG4 (via PDZ domain); reduces ASIC3 expression at the plasma membrane. In terms of processing, could be phosphorylated by PKC, promoting activation of ASIC2/ASIC3 heterotrimers. Expressed in sciatic nerve and dorsal root ganglion (at protein level). Expressed in sensory neurons of dorsal root ganglion. Expressed in Golgi interneurons in the granular layer. Also found in superior cervical ganglia, spinal cord and brain stem.

It localises to the cell membrane. It is found in the cytoplasm. The catalysed reaction is Na(+)(in) = Na(+)(out). The enzyme catalyses K(+)(in) = K(+)(out). It catalyses the reaction Ca(2+)(in) = Ca(2+)(out). With respect to regulation, inhibited by the diuretic drug amiloride. Inhibited by gadolinium ions. Inhibited by extracellular Ca(2+). Activated by lactate. Salicylic acid, diclofenac and aspirin inhibit the sustained current component. Activated by the vertebrate neuropeptides NPFF and NPSF, and the related FMRFamide. Specifically and reversibly inhibited by the a sea anemone toxin APETx2. ASIC3-containing channels are potentiated by the cono-RFamide CNF-Tx1.1, and probably CNF-Tx1.2 and CNF-Tx1.3 (AC P0DL71). Functionally, forms pH-gated heterotrimeric sodium channels that act as postsynaptic excitatory receptors in the nervous system. Upon extracellular acidification, these channels generate a biphasic current with a fast inactivating and a slow sustained phase. ASIC3 is more sensitive to protons and gates between closed, open, and desensitized states faster than other ASICs. Displays high selectivity for sodium ions but can also permit the permeation of other cations. As a neuronal acid sensor, probably contributes to mechanoreception, acid nociception, and heat nociception. By forming heterotrimeric channels with ASIC2, generates a biphasic current with a fast inactivating and a slow sustained phase, which in sensory neurons is proposed to mediate the pain induced by acidosis that occurs in ischemic, damaged or inflamed tissues. The sequence is that of Acid-sensing ion channel 3 from Rattus norvegicus (Rat).